The chain runs to 507 residues: ATP synthase subunit alpha, chloroplastic (507 aa).

170–177 provides a ligand contact to ATP; sequence GDRQTGKT.

This sequence belongs to the ATPase alpha/beta chains family. In terms of assembly, F-type ATPases have 2 components, CF(1) - the catalytic core - and CF(0) - the membrane proton channel. CF(1) has five subunits: alpha(3), beta(3), gamma(1), delta(1), epsilon(1). CF(0) has four main subunits: a, b, b' and c.

It localises to the plastid. It is found in the chloroplast thylakoid membrane. It carries out the reaction ATP + H2O + 4 H(+)(in) = ADP + phosphate + 5 H(+)(out). Its function is as follows. Produces ATP from ADP in the presence of a proton gradient across the membrane. The alpha chain is a regulatory subunit. The sequence is that of ATP synthase subunit alpha, chloroplastic from Amborella trichopoda.